The sequence spans 388 residues: Succinate--CoA ligase [ADP-forming] subunit beta (388 aa).

The region spanning 9–244 (KQLFARYGLP…PSQEDPREAQ (236 aa)) is the ATP-grasp domain. Residues K46, 53-55 (GRG), E99, T102, and E107 each bind ATP. The Mg(2+) site is built by N199 and D213. Substrate contacts are provided by residues N264 and 321-323 (GIV).

This sequence belongs to the succinate/malate CoA ligase beta subunit family. Heterotetramer of two alpha and two beta subunits. The cofactor is Mg(2+).

The catalysed reaction is succinate + ATP + CoA = succinyl-CoA + ADP + phosphate. It catalyses the reaction GTP + succinate + CoA = succinyl-CoA + GDP + phosphate. It participates in carbohydrate metabolism; tricarboxylic acid cycle; succinate from succinyl-CoA (ligase route): step 1/1. In terms of biological role, succinyl-CoA synthetase functions in the citric acid cycle (TCA), coupling the hydrolysis of succinyl-CoA to the synthesis of either ATP or GTP and thus represents the only step of substrate-level phosphorylation in the TCA. The beta subunit provides nucleotide specificity of the enzyme and binds the substrate succinate, while the binding sites for coenzyme A and phosphate are found in the alpha subunit. The sequence is that of Succinate--CoA ligase [ADP-forming] subunit beta from Photorhabdus laumondii subsp. laumondii (strain DSM 15139 / CIP 105565 / TT01) (Photorhabdus luminescens subsp. laumondii).